Here is a 481-residue protein sequence, read N- to C-terminus: MSAQVPTAGRIIQVLGPVVDVEFPPGGLPEVYTALKVTNANLSAAADNLTLEVAQHLGENTVRTIAMDSTEGLGRGMAVTNTGAPIQVPVGKATLGRILNVTGEPVDEMGPVKAQEYWSIHRAPPPFTEQDVRVQMFETGIKVIDLLAPYTRGGKIGLFGGAGVGKTVLLQELIRNVAVERGGFSVFAGVGERTREGNDLYHEMQDTKVIQTDNLEASQAVLVYGQMNEPPGARARVALSALTMAEYFRDVEGRDVLLFVDNIFRFTQAGSEVSALLGRIPSAVGYQPTLATEMGGLQERITSTTKGSITSVQAIYVPADDLTDPAPATAFAHLDATTVLNRSIAELAIFPAVDPLDSTSRILDPAVIGAEHYGVARKVQGILQRYKELQDIIAILGMDELSEDDKLVVARARKIQRFLSQPFFVAKVFTGKDGRYVKLQDTIQGFKEIAEGKHDDIPEGAFYMTGSIDEVVENARKLAAS.

160 to 167 (GGAGVGKT) is an ATP binding site.

This sequence belongs to the ATPase alpha/beta chains family. In terms of assembly, F-type ATPases have 2 components, CF(1) - the catalytic core - and CF(0) - the membrane proton channel. CF(1) has five subunits: alpha(3), beta(3), gamma(1), delta(1), epsilon(1). CF(0) has three main subunits: a(1), b(2) and c(9-12). The alpha and beta chains form an alternating ring which encloses part of the gamma chain. CF(1) is attached to CF(0) by a central stalk formed by the gamma and epsilon chains, while a peripheral stalk is formed by the delta and b chains.

It is found in the cell inner membrane. The enzyme catalyses ATP + H2O + 4 H(+)(in) = ADP + phosphate + 5 H(+)(out). Produces ATP from ADP in the presence of a proton gradient across the membrane. The catalytic sites are hosted primarily by the beta subunits. The protein is ATP synthase subunit beta of Myxococcus xanthus (strain DK1622).